A 124-amino-acid polypeptide reads, in one-letter code: Hydrogenase maturation factor HypA (124 aa).

Ni(2+) is bound at residue H2. 4 residues coordinate Zn(2+): C78, C81, C97, and C100.

This sequence belongs to the HypA/HybF family.

Its function is as follows. Involved in the maturation of [NiFe] hydrogenases. Required for nickel insertion into the metal center of the hydrogenase. This Methanocaldococcus jannaschii (strain ATCC 43067 / DSM 2661 / JAL-1 / JCM 10045 / NBRC 100440) (Methanococcus jannaschii) protein is Hydrogenase maturation factor HypA.